Reading from the N-terminus, the 69-residue chain is Toxin Lc a (69 aa).

4 disulfide bridges follow: C3–C20, C13–C41, C45–C56, and C57–C62.

This sequence belongs to the three-finger toxin family. Long-chain subfamily. Type II alpha-neurotoxin sub-subfamily. As to expression, expressed by the venom gland.

The protein localises to the secreted. In terms of biological role, binds with high affinity to muscular nicotinic acetylcholine receptors (nAChRs), whereas it binds with a low affinity to neuronal alpha-7/CHRNA7 nAChRs. The sequence is that of Toxin Lc a from Laticauda colubrina (Yellow-lipped sea krait).